The sequence spans 566 residues: Berberine bridge enzyme-like D-2 (566 aa).

The N-terminal stretch at Met-1–Ala-33 is a signal peptide. Cys-42 and Cys-103 are disulfide-bonded. The N-linked (GlcNAc...) asparagine glycan is linked to Asn-50. Residues Ser-81–Val-257 enclose the FAD-binding PCMH-type domain. At His-118 the chain carries Pros-8alpha-FAD histidine. N-linked (GlcNAc...) asparagine glycosylation is found at Asn-364, Asn-378, and Asn-503.

It belongs to the oxygen-dependent FAD-linked oxidoreductase family. The cofactor is FAD.

The protein resides in the vacuole. Its pathway is alkaloid biosynthesis; nicotine biosynthesis. Functionally, involved in the biosynthesis of pyridine alkaloid natural products, leading mainly to the production of anabasine, anatabine, nicotine and nornicotine, effective deterrents against herbivores with antiparasitic and pesticide properties (neurotoxins); nornicotine serves as the precursor in the synthesis of the carcinogen compound N'-nitrosonornicotine (NNN). Catalyzes a late oxidation step subsequent to the pyridine ring condensation reaction in the biosynthesis of alkaloids. The chain is Berberine bridge enzyme-like D-2 from Nicotiana tabacum (Common tobacco).